Here is an 848-residue protein sequence, read N- to C-terminus: Adenylate cyclase (848 aa).

The segment at 1–535 (MYLYIETLKQ…DVSHHFPLRL (535 aa)) is catalytic. Residues 541 to 848 (KALYSPCEIR…DTPLLQQYFS (308 aa)) form a regulatory region. Histidine 609 is subject to Phosphohistidine; by CRR.

It belongs to the adenylyl cyclase class-1 family.

The protein localises to the cytoplasm. It catalyses the reaction ATP = 3',5'-cyclic AMP + diphosphate. The chain is Adenylate cyclase (cyaA) from Shigella flexneri.